Consider the following 443-residue polypeptide: Ribulose bisphosphate carboxylase large chain (443 aa).

Positions 89 and 139 each coordinate substrate. Residue lysine 141 is the Proton acceptor of the active site. Residue lysine 143 coordinates substrate. Residues lysine 167, aspartate 169, and glutamate 170 each coordinate Mg(2+). Lysine 167 is modified (N6-carboxylysine). The active-site Proton acceptor is histidine 260. 3 residues coordinate substrate: arginine 261, histidine 293, and serine 345.

This sequence belongs to the RuBisCO large chain family. Type I subfamily. As to quaternary structure, heterohexadecamer of 8 large chains and 8 small chains; disulfide-linked. The disulfide link is formed within the large subunit homodimers. Mg(2+) is required as a cofactor. In terms of processing, the disulfide bond which can form in the large chain dimeric partners within the hexadecamer appears to be associated with oxidative stress and protein turnover.

It is found in the plastid. It localises to the chloroplast. It carries out the reaction 2 (2R)-3-phosphoglycerate + 2 H(+) = D-ribulose 1,5-bisphosphate + CO2 + H2O. It catalyses the reaction D-ribulose 1,5-bisphosphate + O2 = 2-phosphoglycolate + (2R)-3-phosphoglycerate + 2 H(+). Its function is as follows. RuBisCO catalyzes two reactions: the carboxylation of D-ribulose 1,5-bisphosphate, the primary event in carbon dioxide fixation, as well as the oxidative fragmentation of the pentose substrate in the photorespiration process. Both reactions occur simultaneously and in competition at the same active site. This Antirrhinum majus (Garden snapdragon) protein is Ribulose bisphosphate carboxylase large chain.